A 466-amino-acid chain; its full sequence is Purple acid phosphatase 25 (466 aa).

Residues 1–21 (MRMNKILLVFVFLSIATVINS) form the signal peptide. Aspartate 164 serves as a coordination point for Fe cation. N-linked (GlcNAc...) asparagine glycosylation is present at asparagine 172. Fe cation-binding residues include aspartate 192 and tyrosine 195. Aspartate 192 is a binding site for Zn(2+). Zn(2+) contacts are provided by asparagine 229 and histidine 314. Asparagine 229 serves as a coordination point for substrate. The active-site Proton donor is histidine 324. Histidine 351 lines the Zn(2+) pocket. Position 351–353 (351–353 (HVH)) interacts with substrate. Position 353 (histidine 353) interacts with Fe cation. N-linked (GlcNAc...) asparagine glycans are attached at residues asparagine 367 and asparagine 424.

Belongs to the metallophosphoesterase superfamily. Purple acid phosphatase family. Homodimer. Fe cation is required as a cofactor. Requires Zn(2+) as cofactor. Specifically expressed in flowers.

It localises to the secreted. It catalyses the reaction a phosphate monoester + H2O = an alcohol + phosphate. This is Purple acid phosphatase 25 (PAP25) from Arabidopsis thaliana (Mouse-ear cress).